The chain runs to 1257 residues: Stromal processing peptidase, chloroplastic (1257 aa).

Residues 1–142 constitute a chloroplast transit peptide; sequence MAASTSTSSL…ASVKRVQLPH (142 aa). His236 contributes to the Zn(2+) binding site. Residue Glu239 is the Proton acceptor of the active site. His240 provides a ligand contact to Zn(2+). Residue Glu309 is part of the active site. Glu316 contributes to the Zn(2+) binding site. The tract at residues 1233-1257 is disordered; that stretch reads EEAGEGYPGVLPMGRGLSTMTRPTT.

This sequence belongs to the peptidase M16 family. The cofactor is Zn(2+).

It is found in the plastid. The protein resides in the chloroplast stroma. Its function is as follows. Cleaves presequences (transit peptides) from chloroplastic protein precursors. Initially recognizes a precursor by binding to the C-terminus of its transit peptide and then removes the transit peptide in a single endoproteolytic step. In a next step, pursues the cleavage of transit peptide to a subfragment form. This Pisum sativum (Garden pea) protein is Stromal processing peptidase, chloroplastic.